We begin with the raw amino-acid sequence, 102 residues long: Protamine-2 (102 aa).

2 disordered regions span residues Met1–His40 and His67–His102. Phosphoserine is present on residues Ser8, Ser10, and Ser37.

This sequence belongs to the protamine P2 family. Interacts with TDRP. Proteolytic processing into mature chains is required for histone eviction during spermatogenesis. Transition proteins (TNP1 and TNP2) are required for processing. As to expression, testis.

It localises to the nucleus. Its subcellular location is the chromosome. Functionally, protamines substitute for histones in the chromatin of sperm during the haploid phase of spermatogenesis. They compact sperm DNA into a highly condensed, stable and inactive complex. The polypeptide is Protamine-2 (PRM2) (Pan troglodytes (Chimpanzee)).